Consider the following 215-residue polypeptide: Adenylate kinase (215 aa).

10–15 (GAGKGT) contacts ATP. Positions 30–58 (STGDMLREAKRSGTLEKRYLDIMDSGGLL) are NMP. AMP is bound by residues Thr-31, Arg-36, 56 to 58 (GLL), 84 to 87 (GFPR), and Gln-91. Residues 128-158 (HRRTDKRSGQIYHLVYNPPPPGAELEHRADD) are LID. ATP-binding positions include Arg-129 and 138 to 139 (IY). Residues Arg-155 and Arg-166 each contribute to the AMP site. Gly-194 lines the ATP pocket.

The protein belongs to the adenylate kinase family. Monomer.

Its subcellular location is the cytoplasm. It carries out the reaction AMP + ATP = 2 ADP. It functions in the pathway purine metabolism; AMP biosynthesis via salvage pathway; AMP from ADP: step 1/1. In terms of biological role, catalyzes the reversible transfer of the terminal phosphate group between ATP and AMP. Plays an important role in cellular energy homeostasis and in adenine nucleotide metabolism. This chain is Adenylate kinase, found in Sorangium cellulosum (strain So ce56) (Polyangium cellulosum (strain So ce56)).